Consider the following 699-residue polypeptide: LMBR1 domain-containing protein 2 homolog (699 aa).

Topologically, residues M1–Y3 are extracellular. Residues L4–I26 traverse the membrane as a helical segment. At P27–H30 the chain is on the cytoplasmic side. A helical transmembrane segment spans residues I31–I51. The Extracellular segment spans residues P52 to R106. N76 carries an N-linked (GlcNAc...) asparagine glycan. A helical transmembrane segment spans residues I107 to L127. Residues K128–E144 are Cytoplasmic-facing. The helical transmembrane segment at N145–V165 threads the bilayer. The Extracellular portion of the chain corresponds to K166–S181. The helical transmembrane segment at A182–V202 threads the bilayer. Residues P203 to K381 lie on the Cytoplasmic side of the membrane. A helical transmembrane segment spans residues T382 to F402. The Extracellular segment spans residues S403–T426. Residues I427–L447 traverse the membrane as a helical segment. Residues R448 to S467 lie on the Cytoplasmic side of the membrane. Residues L468–G488 traverse the membrane as a helical segment. Residues L489 to D514 are Extracellular-facing. The chain crosses the membrane as a helical span at residues V515–C535. Topologically, residues L536–V699 are cytoplasmic. Residues E564 to D592 are a coiled coil. A disordered region spans residues F669–V699.

It belongs to the LIMR family.

It is found in the membrane. This Drosophila pseudoobscura pseudoobscura (Fruit fly) protein is LMBR1 domain-containing protein 2 homolog.